Here is a 107-residue protein sequence, read N- to C-terminus: Quaternary ammonium compound-resistance protein QacG (107 aa).

4 helical membrane-spanning segments follow: residues 1 to 21 (MHYLYLFISIATEIIGTSFLK), 26 to 46 (FTKLWPTLGTLLSFGICFYFL), 57 to 77 (ITYATWAGLGLVLTTIISVIV), and 84 to 104 (LISIISIGLIVIGVVLLNVFG).

It belongs to the drug/metabolite transporter (DMT) superfamily. Small multidrug resistance (SMR) (TC 2.A.7.1) family.

It is found in the cell membrane. Multidrug exporter. Is implicated for the resistance to bacteriocidal quaternary ammonium compounds. In Staphylococcus sp. (strain ST94), this protein is Quaternary ammonium compound-resistance protein QacG (qacG).